The sequence spans 154 residues: CASP-like protein ARALYDRAFT_485429 (154 aa).

Over 1 to 12 the chain is Cytoplasmic; it reads MENVPGSFGTSA. A helical membrane pass occupies residues 13–33; it reads SFALRFGQTIFSAASLIFMCF. At 34–41 the chain is on the extracellular side; sequence DYDFYDFT. The chain crosses the membrane as a helical span at residues 42–62; the sequence is TFCYLATVMAIVTPWSILLAL. Topologically, residues 63–81 are cytoplasmic; the sequence is TDTYSVLVKLLPQELRVLS. The helical transmembrane segment at 82 to 102 threads the bilayer; that stretch reads IVFAGDFVLSFLSLGGACAVA. The Extracellular portion of the chain corresponds to 103 to 128; the sequence is SATELLASADGKICDGNLCIQYQVSA. The chain crosses the membrane as a helical span at residues 129–149; the sequence is ALAFLCWFLLLASALFNFWSL. Topologically, residues 150–154 are cytoplasmic; that stretch reads PSLYY.

This sequence belongs to the Casparian strip membrane proteins (CASP) family. Homodimer and heterodimers.

Its subcellular location is the cell membrane. The polypeptide is CASP-like protein ARALYDRAFT_485429 (Arabidopsis lyrata subsp. lyrata (Lyre-leaved rock-cress)).